A 301-amino-acid polypeptide reads, in one-letter code: Thyrotroph embryonic factor (301 aa).

2 disordered regions span residues 1 to 70 and 130 to 174; these read MSDA…ASTM and ESAS…DPSC. S30 carries the post-translational modification Phosphoserine. Residues 39 to 59 are compositionally biased toward basic and acidic residues; the sequence is KLMENPPRETRLDKEKGKEKL. Positions 131 to 158 are enriched in low complexity; sequence SASSSTASPPSSSTAIFQPSETVSSTES. Positions 231–294 constitute a bZIP domain; the sequence is DEKYWTRRKK…GKCKTIVSKY (64 aa). The segment at 233–253 is basic motif; the sequence is KYWTRRKKNNVAAKRSRDARR. The segment at 254–261 is leucine-zipper; the sequence is LKENQITI.

It belongs to the bZIP family. PAR subfamily. In terms of assembly, binds DNA as a homodimer or a heterodimer. Can form a heterodimer with DBP. Isoform Alpha and isoform Beta are expressed at high levels in lung, bladder, kidney, gut and brain.

The protein localises to the nucleus. Its function is as follows. Transcription factor that binds to and transactivates the TSHB promoter. Binds to a minimal DNA-binding sequence 5'-[TC][AG][AG]TTA[TC][AG]-3'. Also activates the telokin promoter in smooth muscle-specific and calcium-dependent manner. In Mus musculus (Mouse), this protein is Thyrotroph embryonic factor (Tef).